A 61-amino-acid chain; its full sequence is UPF0391 membrane protein Aave_0978 (61 aa).

Helical transmembrane passes span 5–25 (AIIF…GVAA) and 33–53 (ILFF…VLGV).

This sequence belongs to the UPF0391 family.

It is found in the cell membrane. In Paracidovorax citrulli (strain AAC00-1) (Acidovorax citrulli), this protein is UPF0391 membrane protein Aave_0978.